The primary structure comprises 368 residues: (3S,6E)-nerolidol synthase (368 aa).

Residues D91, N228, and S232 each contribute to the Mg(2+) site. A DDXXE motif motif is present at residues 91–95 (DDLLE).

Belongs to the terpene synthase family. Requires Mg(2+) as cofactor. It depends on Mn(2+) as a cofactor.

It carries out the reaction (2E,6E)-farnesyl diphosphate + H2O = (3S,6E)-nerolidol + diphosphate. The enzyme catalyses (2E)-geranyl diphosphate + H2O = (S)-linalool + diphosphate. Its pathway is secondary metabolite biosynthesis; terpenoid biosynthesis. Sesquiterpene synthase converting farnesyl diphosphate to nerolidol. Also has a monoterpene synthase activity, converting geranyl diphosphate into linalool as the major product. Has no diterpene synthase activity. The sequence is that of (3S,6E)-nerolidol synthase from Selaginella moellendorffii (Spikemoss).